The chain runs to 164 residues: MAYLSDGFEMKSTREYERLGLGFVRFTRGLGRKRILISKRAPENDSPPVKRPSHETTESCRSLLETLHQDILIRVLCHVDHEDLATLKRVSKTIRKAVIEAKKSHFDYSTPKKRLPFRDAILILDSNSNSSSQDDEMEPPNAPIRRRFINRESDLSKISMVLFK.

The disordered stretch occupies residues 38-57 (SKRAPENDSPPVKRPSHETT). The F-box domain occupies 61–109 (RSLLETLHQDILIRVLCHVDHEDLATLKRVSKTIRKAVIEAKKSHFDYS).

This chain is F-box protein At4g05010, found in Arabidopsis thaliana (Mouse-ear cress).